Reading from the N-terminus, the 101-residue chain is Integration host factor subunit beta (101 aa).

The protein belongs to the bacterial histone-like protein family. In terms of assembly, heterodimer of an alpha and a beta chain.

Its function is as follows. This protein is one of the two subunits of integration host factor, a specific DNA-binding protein that functions in genetic recombination as well as in transcriptional and translational control. This chain is Integration host factor subunit beta, found in Rhodopseudomonas palustris (strain BisB5).